Here is a 1773-residue protein sequence, read N- to C-terminus: Mucin-22 (1773 aa).

An N-terminal signal peptide occupies residues 1–26 (MRRGNISPAFWFLWLLLFGLLGPSSE). Residues 27–1660 (NTTAFTKGSD…VIKPSGYLQP (1634 aa)) are Extracellular-facing. Disordered regions lie at residues 61 to 102 (TGSK…TDSG), 176 to 357 (TMAS…SETT), 372 to 405 (MGSE…VGSE), 434 to 572 (SETI…STAS), 590 to 674 (TVGS…EGSE), 754 to 1026 (DTTT…ETTM), 1064 to 1485 (TTIA…GSET), and 1603 to 1639 (MGAS…SMGT). Residues 153–1514 (MASSTTSTAG…PTATSLTGSE (1362 aa)) are 124 X 10 AA approximate repeats. The segment covering 178 to 243 (ASTTGSETAT…GSEATTTSTA (66 aa)) has biased composition (low complexity). Residues 248–258 (ITASSMSSETT) are compositionally biased toward polar residues. The span at 262 to 357 (AAGSNTTTAS…TVSTAGSETT (96 aa)) shows a compositional bias: low complexity. 2 stretches are compositionally biased toward low complexity: residues 440–481 (STAG…AAST) and 490–546 (STAG…SEPT). A compositionally biased stretch (polar residues) spans 547 to 572 (MASTMGSETTMASTIGPETTKVSTAS). Low complexity-rich tracts occupy residues 755 to 1025 (TTTA…SETT) and 1064 to 1465 (TTIA…GSET). 2 stretches are compositionally biased toward polar residues: residues 1466 to 1485 (NTAC…GSET) and 1615 to 1639 (RTTT…SMGT). A helical membrane pass occupies residues 1661–1681 (WAIILISLAAVVAAVGLSVGL). Residues 1682-1773 (SFCLRNLFFP…GGHYGHGGGH (92 aa)) are Cytoplasmic-facing.

In terms of tissue distribution, expressed in lung by serous cells of the submucosal gland (at protein level). Detected in the placenta, lung and testis.

It is found in the membrane. The sequence is that of Mucin-22 (MUC22) from Homo sapiens (Human).